A 370-amino-acid chain; its full sequence is Mitochondrial distribution and morphology protein 10 (370 aa).

Belongs to the MDM10 family. In terms of assembly, component of the ER-mitochondria encounter structure (ERMES) or MDM complex, composed of mmm1, mdm10, mdm12 and mdm34. Associates with the mitochondrial outer membrane sorting assembly machinery SAM(core) complex.

The protein localises to the mitochondrion outer membrane. Its function is as follows. Component of the ERMES/MDM complex, which serves as a molecular tether to connect the endoplasmic reticulum and mitochondria. Components of this complex are involved in the control of mitochondrial shape and protein biogenesis and may function in phospholipid exchange. mdm10 is involved in the late assembly steps of the general translocase of the mitochondrial outer membrane (TOM complex). Functions in the tom40-specific route of the assembly of outer membrane beta-barrel proteins, including the association of tom40 with the receptor tom22 and small TOM proteins. Can associate with the SAM(core) complex as well as the mdm12-mmm1 complex, both involved in late steps of the major beta-barrel assembly pathway, that is responsible for biogenesis of all outer membrane beta-barrel proteins. May act as a switch that shuttles between both complexes and channels precursor proteins into the tom40-specific pathway. Plays a role in mitochondrial morphology and in the inheritance of mitochondria. This is Mitochondrial distribution and morphology protein 10 (mdm10) from Schizosaccharomyces pombe (strain 972 / ATCC 24843) (Fission yeast).